We begin with the raw amino-acid sequence, 359 residues long: 3-dehydroquinate synthase (359 aa).

Residues 72-77 (DGEHYK), 106-110 (GVIGD), 130-131 (TT), Lys-143, and Lys-152 contribute to the NAD(+) site. Glu-185, His-248, and His-265 together coordinate Zn(2+).

It belongs to the sugar phosphate cyclases superfamily. Dehydroquinate synthase family. Requires Co(2+) as cofactor. Zn(2+) is required as a cofactor. It depends on NAD(+) as a cofactor.

Its subcellular location is the cytoplasm. The enzyme catalyses 7-phospho-2-dehydro-3-deoxy-D-arabino-heptonate = 3-dehydroquinate + phosphate. It participates in metabolic intermediate biosynthesis; chorismate biosynthesis; chorismate from D-erythrose 4-phosphate and phosphoenolpyruvate: step 2/7. Catalyzes the conversion of 3-deoxy-D-arabino-heptulosonate 7-phosphate (DAHP) to dehydroquinate (DHQ). The chain is 3-dehydroquinate synthase from Thermodesulfovibrio yellowstonii (strain ATCC 51303 / DSM 11347 / YP87).